A 246-amino-acid chain; its full sequence is 1-(5-phosphoribosyl)-5-[(5-phosphoribosylamino)methylideneamino] imidazole-4-carboxamide isomerase (246 aa).

D8 acts as the Proton acceptor in catalysis. The active-site Proton donor is D131.

This sequence belongs to the HisA/HisF family.

The protein resides in the cytoplasm. It catalyses the reaction 1-(5-phospho-beta-D-ribosyl)-5-[(5-phospho-beta-D-ribosylamino)methylideneamino]imidazole-4-carboxamide = 5-[(5-phospho-1-deoxy-D-ribulos-1-ylimino)methylamino]-1-(5-phospho-beta-D-ribosyl)imidazole-4-carboxamide. It participates in amino-acid biosynthesis; L-histidine biosynthesis; L-histidine from 5-phospho-alpha-D-ribose 1-diphosphate: step 4/9. The polypeptide is 1-(5-phosphoribosyl)-5-[(5-phosphoribosylamino)methylideneamino] imidazole-4-carboxamide isomerase (Lactococcus lactis subsp. cremoris (strain MG1363)).